A 425-amino-acid chain; its full sequence is UBX domain-containing protein 4 (425 aa).

Residues T224–K257 form a disordered region. The segment covering Y236 to N254 has biased composition (polar residues). Position 338 is a phosphoserine (S338). One can recognise a UBX domain in the interval P341–T390.

It is found in the cytoplasm. Its subcellular location is the nucleus. In terms of biological role, involved in CDC48-dependent protein degradation through the ubiquitin/proteasome pathway. The protein is UBX domain-containing protein 4 (ubx4) of Schizosaccharomyces pombe (strain 972 / ATCC 24843) (Fission yeast).